Reading from the N-terminus, the 51-residue chain is Cyclic phosphodiesterase (51 aa).

H11 acts as the Proton donor/acceptor in catalysis. T13 contributes to the substrate binding site. H38 functions as the Proton donor/acceptor in the catalytic mechanism. S40 and Y43 together coordinate substrate.

It belongs to the 2H phosphoesterase superfamily. CPD1 family.

Hydrolyzes ADP-ribose 1'',2''-cyclic phosphate (Appr&gt;1) that is produced during tRNA splicing into ADP-ribose 1''-phosphate (Appr-1''p). This is Cyclic phosphodiesterase from Triticum aestivum (Wheat).